The following is a 799-amino-acid chain: Homeobox protein engrailed (799 aa).

4 disordered regions span residues 189–331 (LPSR…DATK), 369–444 (GNFL…SLRQ), 554–664 (HPFL…DKAK), and 678–705 (SDRP…RTAF). Residues 210–222 (QSPSTSIRSNLVS) are compositionally biased toward polar residues. Composition is skewed to basic and acidic residues over residues 228–239 (SRRDDQETSDSC) and 246–256 (RAINDSERYDV). Polar residues-rich tracts occupy residues 284-299 (LNLT…QLFH) and 377-401 (HTFQ…SSPD). The span at 416–431 (ESLSSPSSSSSSSRSS) shows a compositional bias: low complexity. Basic and acidic residues-rich tracts occupy residues 608–619 (DQKKRSRDESAS) and 629–648 (VHLK…EKGN). A DNA-binding region (homeobox) is located at residues 698 to 757 (EKRPRTAFTNDQLQRLKREFDECRYLTETRRKNLADELGLTESQIKIWFQNKRAKIKKSV).

This sequence belongs to the engrailed homeobox family. In terms of tissue distribution, expressed in the dorsal ectoderm of early gastrulae in a band corresponding to the peripheral area of the presumptive shell gland. Also expressed at four points along the posterior ectoderm. In late gastrulae, it is predominantly expressed in the peripheral ectoderm of the shell gland and in spots at the posterior end behind the presumptive foot. Expressed in late trochophore larvae at four points behind the foot, at two locations at the base of the foot and in the peripheral ectoderm of the shell gland.

It is found in the nucleus. Functionally, may be involved in shell and shell gland formation during development. The chain is Homeobox protein engrailed from Lymnaea stagnalis (Great pond snail).